The following is a 423-amino-acid chain: Ferrochelatase, mitochondrial (423 aa).

The transit peptide at 1 to 54 (MRSLGANMAAALRAAGVLLRDPLASSSWRVCQPWRWKSGAAAAAVTTETAQHAQ) directs the protein to the mitochondrion. Lys-57 bears the N6-acetyllysine mark. Protoporphyrin IX is bound by residues Arg-115, Tyr-123, and Ser-130. Lys-138 is modified (N6-succinyllysine). Cys-196 contributes to the [2Fe-2S] cluster binding site. Active-site residues include His-230 and Asp-383. The [2Fe-2S] cluster site is built by Cys-403, Cys-406, and Cys-411. Lys-415 bears the N6-acetyllysine; alternate mark. An N6-succinyllysine; alternate modification is found at Lys-415.

It belongs to the ferrochelatase family. As to quaternary structure, homodimer. Homotetramer. Interacts with PGRMC1; the interaction results in decreased FECH activity. Interacts with ABCB10 and SLC25A37; this interaction forms an oligomeric complex. Forms a complex with ABCB7 and ABCB10, where a dimeric FECH bridges ABCB7 and ABCB10 homodimers; this complex may be required for cellular iron homeostasis, mitochondrial function and heme biosynthesis. Interacts with ABCB7 and ABCB10. [2Fe-2S] cluster serves as cofactor.

It localises to the mitochondrion inner membrane. The catalysed reaction is heme b + 2 H(+) = protoporphyrin IX + Fe(2+). It functions in the pathway porphyrin-containing compound metabolism; protoheme biosynthesis; protoheme from protoporphyrin-IX: step 1/1. Its activity is regulated as follows. Inhibited by nitric oxide (NO). The 2Fe-2S cluster could act as a NO sensor. Its function is as follows. Catalyzes the ferrous insertion into protoporphyrin IX and participates in the terminal step in the heme biosynthetic pathway. The protein is Ferrochelatase, mitochondrial of Homo sapiens (Human).